Consider the following 264-residue polypeptide: SPRY domain-containing SOCS box protein 2 (264 aa).

The segment covering 1–18 (MGQTALARGSSSTPSSHA) has biased composition (polar residues). The disordered stretch occupies residues 1–53 (MGQTALARGSSSTPSSHALYSDLSPPEGLEELLSAPPPDLGAQRHHGWNPKDC). Over residues 21 to 34 (SDLSPPEGLEELLS) the composition is skewed to low complexity. The B30.2/SPRY domain maps to 26 to 221 (PEGLEELLSA…VRIRYLGERR (196 aa)). Residues 222-264 (AEEPQSLLHLSRLCVRHALGDTRLGQISSLPLPPAMKRYLLYK) enclose the SOCS box domain.

The protein belongs to the SPSB family. In terms of assembly, component of the probable ECS(SPSB2) E3 ubiquitin-protein ligase complex which contains CUL5, RNF7/RBX2, Elongin BC complex and SPSB2. Interacts with CUL5, RNF7, ELOB and ELOC. Interacts with MET. Interacts (via B30.2/SPRY domain) with PAWR; this interaction occurs in association with the Elongin BC complex. Interacts with NOS2.

The protein resides in the cytoplasm. The protein localises to the cytosol. Its pathway is protein modification; protein ubiquitination. Substrate recognition component of a SCF-like ECS (Elongin BC-CUL2/5-SOCS-box protein) E3 ubiquitin-protein ligase complex which mediates the ubiquitination and subsequent proteasomal degradation of target proteins. Negatively regulates nitric oxide (NO) production and limits cellular toxicity in activated macrophages by mediating the ubiquitination and proteasomal degradation of NOS2. Acts as a bridge which links NOS2 with the ECS E3 ubiquitin ligase complex components ELOC and CUL5. In Rattus norvegicus (Rat), this protein is SPRY domain-containing SOCS box protein 2 (Spsb2).